Here is a 340-residue protein sequence, read N- to C-terminus: 4-dimethylallyltryptophan N-methyltransferase easF (340 aa).

The protein belongs to the methyltransferase superfamily. In terms of assembly, homodimer.

It carries out the reaction 4-(3-methylbut-2-enyl)-L-tryptophan + S-adenosyl-L-methionine = 4-(3-methylbut-2-enyl)-L-abrine + S-adenosyl-L-homocysteine + H(+). It functions in the pathway alkaloid biosynthesis; ergot alkaloid biosynthesis. Its function is as follows. 4-dimethylallyltryptophan N-methyltransferase; part of the gene cluster that mediates the biosynthesis of fungal ergot alkaloid. DmaW catalyzes the first step of ergot alkaloid biosynthesis by condensing dimethylallyl diphosphate (DMAP) and tryptophan to form 4-dimethylallyl-L-tryptophan. The second step is catalyzed by the methyltransferase easF that methylates 4-dimethylallyl-L-tryptophan in the presence of S-adenosyl-L-methionine, resulting in the formation of 4-dimethylallyl-L-abrine. The catalase easC and the FAD-dependent oxidoreductase easE then transform 4-dimethylallyl-L-abrine to chanoclavine-I which is further oxidized by easD in the presence of NAD(+), resulting in the formation of chanoclavine-I aldehyde. Chanoclavine-I aldehyde is the precursor of ergoamides and ergopeptines in Clavicipitaceae, and clavine-type alcaloids such as fumiclavine in Trichocomaceae. However, the metabolites downstream of chanoclavine-I aldehyde in Arthrodermataceae have not been identified yet. This Arthroderma benhamiae (strain ATCC MYA-4681 / CBS 112371) (Trichophyton mentagrophytes) protein is 4-dimethylallyltryptophan N-methyltransferase easF.